The chain runs to 274 residues: Large ribosomal subunit protein uL2 (274 aa).

A disordered region spans residues R221 to K256.

The protein belongs to the universal ribosomal protein uL2 family. Part of the 50S ribosomal subunit. Forms a bridge to the 30S subunit in the 70S ribosome.

In terms of biological role, one of the primary rRNA binding proteins. Required for association of the 30S and 50S subunits to form the 70S ribosome, for tRNA binding and peptide bond formation. It has been suggested to have peptidyltransferase activity; this is somewhat controversial. Makes several contacts with the 16S rRNA in the 70S ribosome. This Thioalkalivibrio sulfidiphilus (strain HL-EbGR7) protein is Large ribosomal subunit protein uL2.